A 357-amino-acid polypeptide reads, in one-letter code: Actin, cytoplasmic (357 aa).

The protein belongs to the actin family. Met-1 may be removed after translation.

The protein localises to the cytoplasm. Its subcellular location is the cytoskeleton. It catalyses the reaction ATP + H2O = ADP + phosphate + H(+). Actins are highly conserved proteins that are involved in various types of cell motility and are ubiquitously expressed in all eukaryotic cells. This Oxytricha fallax protein is Actin, cytoplasmic.